The following is a 225-amino-acid chain: Urease subunit alpha (225 aa).

The segment at 1 to 102 (MRLTPKELDK…LVTIHNPIED (102 aa)) is urease gamma. A urease beta region spans residues 103-225 (NGKLTPGEYI…ANAAQKHFIH (123 aa)).

It in the N-terminal section; belongs to the urease gamma subunit family. This sequence in the C-terminal section; belongs to the urease beta subunit family. In terms of assembly, heterohexamer of 3 UreA (alpha) and 3 UreB (beta) subunits.

It localises to the cytoplasm. It catalyses the reaction urea + 2 H2O + H(+) = hydrogencarbonate + 2 NH4(+). It participates in nitrogen metabolism; urea degradation; CO(2) and NH(3) from urea (urease route): step 1/1. This Helicobacter hepaticus (strain ATCC 51449 / 3B1) protein is Urease subunit alpha.